The sequence spans 283 residues: BTB/POZ domain-containing protein KCTD15 (283 aa).

Positions Met-1–Thr-33 are disordered. A compositionally biased stretch (polar residues) spans Ser-9–Thr-21. 3 positions are modified to phosphoserine: Ser-31, Ser-35, and Ser-38. A BTB domain is found at Ala-56–Asp-126.

In terms of assembly, forms oligomers, predominantly homopentamers. Interacts with KCTD1, probably forming heteropentamers depending on its abundance in a cell-type dependent manner. Interacts with TFAP2A; this interaction inhibits TFAP2A transcriptional activation. In terms of tissue distribution, expressed in the cerebral cortex, cerebellum, and hypothalamus (at protein level). Expressed in the arcuate hypothalamic nucleus, the ventromedial hypothalamic nucleus and the accumbens nucleus of the ventral striatum.

It localises to the nucleus. Functionally, during embryonic development, interferes with neural crest formation. Inhibits AP2 transcriptional activity by interaction with its activation domain. This Mus musculus (Mouse) protein is BTB/POZ domain-containing protein KCTD15 (Kctd15).